The chain runs to 363 residues: Chemerin-like receptor 1 (363 aa).

Topologically, residues 1 to 39 (MDFEDYNSTYEDSYTDDFDTIVALEEFSPLEGRVVRIFL) are extracellular. The N-linked (GlcNAc...) asparagine glycan is linked to Asn-7. A helical membrane pass occupies residues 40–60 (VVVYSIICFLGILGNGLVIVI). Residues 61–71 (ATFKMKKTVNT) are Cytoplasmic-facing. Residues 72–92 (VWFLNLAVADFLFNVFLPIHI) traverse the membrane as a helical segment. The Extracellular portion of the chain corresponds to 93–109 (AYAAMDYHWVFGTAMCK). Residues Cys-108 and Cys-185 are joined by a disulfide bond. The helical transmembrane segment at 110 to 130 (ISNFLLIHNMYTSVFLLTVIS) threads the bilayer. Topologically, residues 131 to 152 (FDRCISVLLPVWSQNHRSIRLA) are cytoplasmic. A helical membrane pass occupies residues 153–173 (YMACVVIWVLAFFLSSPSLVF). The Extracellular segment spans residues 174–220 (RDTAHLHGKISCFNNFSLSATSSSSWPTHPQMDTVGFGRQMVVTITR). A glycan (N-linked (GlcNAc...) asparagine) is linked at Asn-188. Residues 221-241 (FLCGFLVPVLIISACYFTIVY) traverse the membrane as a helical segment. The Cytoplasmic portion of the chain corresponds to 242 to 256 (KLRRNRLAKTKKPFK). A helical transmembrane segment spans residues 257-277 (IIVTIIITFFLCWCPYHTLYL). The Extracellular portion of the chain corresponds to 278–283 (LELHHR). Residues 284–304 (AMPGSVFSLGVPLATAIAIAN) form a helical membrane-spanning segment. At 305–363 (SCMNPILYVFMGQDFKKFKVALFSRLVNALSEDTGHSSYPSHRSFTKMSSMNERETSML) the chain is on the cytoplasmic side. Ser-335 is modified (phosphoserine). Residues 337–363 (DTGHSSYPSHRSFTKMSSMNERETSML) form a disordered region. Thr-338 carries the post-translational modification Phosphothreonine. Over residues 340-355 (HSSYPSHRSFTKMSSM) the composition is skewed to polar residues. A phosphoserine mark is found at Ser-345, Ser-348, and Ser-354.

This sequence belongs to the chemokine-like receptor (CMKLR) family. In terms of tissue distribution, predominantly expressed in spleen and temperately in adipose tissue.

Its subcellular location is the cell membrane. Its function is as follows. Receptor for the chemoattractant adipokine chemerin/RARRES2 and for the omega-3 fatty acid derived molecule resolvin E1. Interaction with RARRES2 initiates activation of G proteins G(i)/G(o) and beta-arrestin pathways inducing cellular responses via second messenger pathways such as intracellular calcium mobilization, phosphorylation of MAP kinases MAPK1/MAPK3 (ERK1/2), TYRO3, MAPK14/P38MAPK and PI3K leading to multifunctional effects, like, reduction of immune responses, enhancing of adipogenesis and angionesis. Resolvin E1 down-regulates cytokine production in macrophages by reducing the activation of MAPK1/3 (ERK1/2) and NF-kappa-B. Positively regulates adipogenesis and adipocyte metabolism. The sequence is that of Chemerin-like receptor 1 (CMLKR1) from Sus scrofa (Pig).